Consider the following 513-residue polypeptide: Maturase K (513 aa).

It belongs to the intron maturase 2 family. MatK subfamily.

It localises to the plastid. It is found in the chloroplast. In terms of biological role, usually encoded in the trnK tRNA gene intron. Probably assists in splicing its own and other chloroplast group II introns. This chain is Maturase K, found in Typha latifolia (Bulrush).